The primary structure comprises 211 residues: Urease accessory protein UreG (211 aa).

11–18 (GPVGSGKT) lines the GTP pocket.

Belongs to the SIMIBI class G3E GTPase family. UreG subfamily. Homodimer. UreD, UreF and UreG form a complex that acts as a GTP-hydrolysis-dependent molecular chaperone, activating the urease apoprotein by helping to assemble the nickel containing metallocenter of UreC. The UreE protein probably delivers the nickel.

It localises to the cytoplasm. In terms of biological role, facilitates the functional incorporation of the urease nickel metallocenter. This process requires GTP hydrolysis, probably effectuated by UreG. This Laribacter hongkongensis (strain HLHK9) protein is Urease accessory protein UreG.